The sequence spans 382 residues: Flap endonuclease 1 (382 aa).

An N-domain region spans residues 1 to 104 (MGIKGLSQVI…GELEKRTERR (104 aa)). Asp34 lines the Mg(2+) pocket. DNA is bound by residues Arg47 and Arg70. Mg(2+) contacts are provided by Asp86, Glu158, Glu160, Asp179, and Asp181. The segment at 122–253 (EAEKFERRLV…KKAVELIKQH (132 aa)) is I-domain. A DNA-binding site is contributed by Glu158. 2 residues coordinate DNA: Gly231 and Asp233. Asp233 serves as a coordination point for Mg(2+). Residues 336–344 (TQGRIDSFF) form an interaction with PCNA region. Residues 359–368 (KAQEEAEKMK) are compositionally biased toward basic and acidic residues. A disordered region spans residues 359–382 (KAQEEAEKMKKGGKKSGPPKKKAK). Basic residues predominate over residues 369–382 (KGGKKSGPPKKKAK).

This sequence belongs to the XPG/RAD2 endonuclease family. FEN1 subfamily. In terms of assembly, interacts with PCNA. Three molecules of crn-1 bind to one PCNA trimer with each molecule binding to one PCNA monomer. PCNA stimulates the nuclease activity without altering cleavage specificity. Mg(2+) serves as cofactor. Post-translationally, phosphorylated. Phosphorylation upon DNA damage induces relocalization to the nuclear plasma.

Its subcellular location is the nucleus. It is found in the nucleolus. It localises to the nucleoplasm. The protein resides in the mitochondrion. Functionally, structure-specific nuclease with 5'-flap endonuclease and 5'-3' exonuclease activities involved in DNA replication and repair. During DNA replication, cleaves the 5'-overhanging flap structure that is generated by displacement synthesis when DNA polymerase encounters the 5'-end of a downstream Okazaki fragment. It enters the flap from the 5'-end and then tracks to cleave the flap base, leaving a nick for ligation. Also involved in the long patch base excision repair (LP-BER) pathway, by cleaving within the apurinic/apyrimidinic (AP) site-terminated flap. Acts as a genome stabilization factor that prevents flaps from equilibrating into structures that lead to duplications and deletions. Also possesses 5'-3' exonuclease activity on nicked or gapped double-stranded DNA, and exhibits RNase H activity. Also involved in replication and repair of rDNA and in repairing mitochondrial DNA. This is Flap endonuclease 1 from Caenorhabditis briggsae.